The primary structure comprises 79 residues: Suppressor of tumorigenicity 20 protein (79 aa).

In terms of tissue distribution, expressed in leukocytes, lung, spleen, liver, heart, kidney, muscle and uterine cervix. Down-regulated in cervical cancer.

In terms of biological role, may act as a tumor suppressor. Promotes apoptosis of cancer cells. In Homo sapiens (Human), this protein is Suppressor of tumorigenicity 20 protein (ST20).